A 222-amino-acid chain; its full sequence is GTP cyclohydrolase 1 (222 aa).

Cys-111, His-114, and Cys-182 together coordinate Zn(2+).

The protein belongs to the GTP cyclohydrolase I family. In terms of assembly, toroid-shaped homodecamer, composed of two pentamers of five dimers.

It carries out the reaction GTP + H2O = 7,8-dihydroneopterin 3'-triphosphate + formate + H(+). It participates in cofactor biosynthesis; 7,8-dihydroneopterin triphosphate biosynthesis; 7,8-dihydroneopterin triphosphate from GTP: step 1/1. This Salmonella choleraesuis (strain SC-B67) protein is GTP cyclohydrolase 1.